A 261-amino-acid polypeptide reads, in one-letter code: MSTPPANVTTAHVLDLFSLKGKNCVVFGAAKGIGFSIATAFAQAGGNVIITYLTTDPTEKAKKLAEETGVQVHTLKIDISRSDTVEAGVEEIQKIFKEIHVVVANAGMPFRRSVLDSPPHEFEKVMNINTNSVYRVAYYMGKIFKKQGFGNLIATASMSATIVNAPQHIAAYCASKAAVRQLCKALAVEWAEFARINSVSPGYFATDMPGYEFLKQWEPYVPFKRLGLTPELRGTYLYLASNASSFVTGLDLIVDGGYTCL.

4 residues coordinate NADP(+): isoleucine 33, lysine 60, aspartate 78, and asparagine 105. Catalysis depends on serine 157, which acts as the Proton donor. NADP(+)-binding residues include tyrosine 172, lysine 176, and threonine 206. Residue tyrosine 172 is the Proton acceptor of the active site. Lysine 176 (lowers pKa of active site Tyr) is an active-site residue.

This sequence belongs to the short-chain dehydrogenases/reductases (SDR) family.

The protein localises to the cytoplasm. It is found in the nucleus. This is an uncharacterized protein from Schizosaccharomyces pombe (strain 972 / ATCC 24843) (Fission yeast).